The primary structure comprises 1048 residues: Putative cation efflux system protein SilA (1048 aa).

The next 14 helical transmembrane spans lie at 14–34, 125–145, 338–358, 363–383, 391–411, 446–466, 485–505, 539–559, 737–757, 871–891, 897–917, 928–948, 985–1005, and 1012–1032; these read FLVMMGALFLSIWGTWTIINT, VSSEIGPDATGVGWIFEYALV, LSSKLLEEFFVVAIVCALFLW, ALVAIISLPLGLCIAFIVMHF, MSLGGIAIAVGAMVDAAIVMI, VGPALFISLLIITLSFIPIFT, SMAGAAALAIIVIPILMGFWI, TLLVAALSIFTVVWPLSQVGG, GMTVGDVQLFVSSAIGGAMVG, KLKLMVPMTVMIIFILLYLAF, ALLILMSLPFALVGGIWFLYW, TGFIALAGVAAEFGVVMLMYL, AMTVAVIIAGLLPILWGTGAG, and IAAPMIGGMITAPLLSLFIIP.

The protein belongs to the resistance-nodulation-cell division (RND) (TC 2.A.6) family.

The protein localises to the cell inner membrane. In terms of biological role, component of the sil cation-efflux system that confers resistance to silver. May be part of a three-component cation/proton antiporter. This is Putative cation efflux system protein SilA (silA) from Salmonella typhimurium.